The following is a 186-amino-acid chain: RIO-type serine/threonine-protein kinase Rio1 (186 aa).

An ATP-binding site is contributed by K15. D124 acts as the Proton acceptor in catalysis. Residues N129 and D140 each contribute to the Mg(2+) site. D140 (4-aspartylphosphate intermediate) is an active-site residue.

The protein belongs to the protein kinase superfamily. RIO-type Ser/Thr kinase family.

The enzyme catalyses L-seryl-[protein] + ATP = O-phospho-L-seryl-[protein] + ADP + H(+). It catalyses the reaction L-threonyl-[protein] + ATP = O-phospho-L-threonyl-[protein] + ADP + H(+). The catalysed reaction is ATP + H2O = ADP + phosphate + H(+). Despite the protein kinase domain is proposed to act predominantly as an ATPase. The protein is RIO-type serine/threonine-protein kinase Rio1 (rio1) of Thermoplasma acidophilum (strain ATCC 25905 / DSM 1728 / JCM 9062 / NBRC 15155 / AMRC-C165).